The chain runs to 598 residues: Probable translation initiation factor IF-2 (598 aa).

Positions 3 to 223 (LRCPIVSVLG…ISGLAQRFME (221 aa)) constitute a tr-type G domain. Residues 12–19 (GHVDHGKT) are G1. 12–19 (GHVDHGKT) contacts GTP. The interval 37–41 (GITQH) is G2. Positions 76-79 (DTPG) are G3. Residues 76-80 (DTPGH) and 130-133 (NKID) contribute to the GTP site. Residues 130-133 (NKID) are G4. Positions 200-202 (SAM) are G5.

This sequence belongs to the TRAFAC class translation factor GTPase superfamily. Classic translation factor GTPase family. IF-2 subfamily.

Its function is as follows. Function in general translation initiation by promoting the binding of the formylmethionine-tRNA to ribosomes. Seems to function along with eIF-2. This Methanococcus aeolicus (strain ATCC BAA-1280 / DSM 17508 / OCM 812 / Nankai-3) protein is Probable translation initiation factor IF-2.